Reading from the N-terminus, the 76-residue chain is Omega-scoloptoxin(13)-Ssm2b (76 aa).

The signal sequence occupies residues 1–22 (MAYIYALIFAIVVCMNTDVIQA).

The protein belongs to the scoloptoxin-13 family. Contains 3 disulfide bonds. In terms of tissue distribution, expressed by the venom gland.

It localises to the secreted. Functionally, inhibits voltage-gated calcium channel (Cav) currents. This chain is Omega-scoloptoxin(13)-Ssm2b, found in Scolopendra mutilans (Chinese red-headed centipede).